The sequence spans 666 residues: 1-deoxy-D-xylulose-5-phosphate synthase (666 aa).

Residues H103 and 144-146 (AHS) each bind thiamine diphosphate. Position 175 (D175) interacts with Mg(2+). Thiamine diphosphate is bound by residues 176 to 177 (GA), N204, Y314, and E396. Position 204 (N204) interacts with Mg(2+).

The protein belongs to the transketolase family. DXPS subfamily. In terms of assembly, homodimer. It depends on Mg(2+) as a cofactor. The cofactor is thiamine diphosphate.

It catalyses the reaction D-glyceraldehyde 3-phosphate + pyruvate + H(+) = 1-deoxy-D-xylulose 5-phosphate + CO2. It functions in the pathway metabolic intermediate biosynthesis; 1-deoxy-D-xylulose 5-phosphate biosynthesis; 1-deoxy-D-xylulose 5-phosphate from D-glyceraldehyde 3-phosphate and pyruvate: step 1/1. In terms of biological role, catalyzes the acyloin condensation reaction between C atoms 2 and 3 of pyruvate and glyceraldehyde 3-phosphate to yield 1-deoxy-D-xylulose-5-phosphate (DXP). This chain is 1-deoxy-D-xylulose-5-phosphate synthase, found in Nitrobacter winogradskyi (strain ATCC 25391 / DSM 10237 / CIP 104748 / NCIMB 11846 / Nb-255).